A 182-amino-acid polypeptide reads, in one-letter code: Thioredoxin X, chloroplastic (182 aa).

The N-terminal 67 residues, 1–67 (MDSIVSSSTI…TRKSSSSVIR (67 aa)), are a transit peptide targeting the chloroplast. In terms of domain architecture, Thioredoxin spans 68–177 (CGGIKEIGES…LKEYIDGLLN (110 aa)). Catalysis depends on nucleophile residues C99 and C102. C99 and C102 are joined by a disulfide.

The protein belongs to the thioredoxin family. In terms of tissue distribution, predominantly expressed in leaves.

Its subcellular location is the plastid. It is found in the chloroplast stroma. Its function is as follows. Probable thiol-disulfide oxidoreductase that may participate in various redox reactions. This is Thioredoxin X, chloroplastic (ATHX) from Arabidopsis thaliana (Mouse-ear cress).